Reading from the N-terminus, the 357-residue chain is Cobalt-precorrin-5B C(1)-methyltransferase (357 aa).

The protein belongs to the CbiD family.

It catalyses the reaction Co-precorrin-5B + S-adenosyl-L-methionine = Co-precorrin-6A + S-adenosyl-L-homocysteine. The protein operates within cofactor biosynthesis; adenosylcobalamin biosynthesis; cob(II)yrinate a,c-diamide from sirohydrochlorin (anaerobic route): step 6/10. Its function is as follows. Catalyzes the methylation of C-1 in cobalt-precorrin-5B to form cobalt-precorrin-6A. This Alkaliphilus oremlandii (strain OhILAs) (Clostridium oremlandii (strain OhILAs)) protein is Cobalt-precorrin-5B C(1)-methyltransferase.